The chain runs to 156 residues: Biotin carboxyl carrier protein of acetyl-CoA carboxylase (156 aa).

The 77-residue stretch at 80–156 (GNVVRSPMVG…EFDQPLFTIV (77 aa)) folds into the Biotinyl-binding domain. K122 carries the post-translational modification N6-biotinyllysine.

In terms of assembly, homodimer.

Its pathway is lipid metabolism; fatty acid biosynthesis. Its function is as follows. This protein is a component of the acetyl coenzyme A carboxylase complex; first, biotin carboxylase catalyzes the carboxylation of the carrier protein and then the transcarboxylase transfers the carboxyl group to form malonyl-CoA. This chain is Biotin carboxyl carrier protein of acetyl-CoA carboxylase (accB), found in Pseudomonas aeruginosa (strain ATCC 15692 / DSM 22644 / CIP 104116 / JCM 14847 / LMG 12228 / 1C / PRS 101 / PAO1).